The following is a 92-amino-acid chain: Acylphosphatase (92 aa).

The region spanning 5–92 is the Acylphosphatase-like domain; that stretch reads RWHLLVSGKV…QEFTDFRTTH (88 aa). Residues Arg20 and Asn38 contribute to the active site.

Belongs to the acylphosphatase family.

The catalysed reaction is an acyl phosphate + H2O = a carboxylate + phosphate + H(+). The sequence is that of Acylphosphatase (acyP) from Marinobacter nauticus (strain ATCC 700491 / DSM 11845 / VT8) (Marinobacter aquaeolei).